The sequence spans 248 residues: Stress-related protein (248 aa).

It belongs to the REF/SRPP family.

This Vitis riparia (Frost grape) protein is Stress-related protein (SRP).